A 397-amino-acid chain; its full sequence is S-adenosylmethionine synthase (397 aa).

Position 17 (His17) interacts with ATP. Residue Asp19 participates in Mg(2+) binding. Residue Glu45 participates in K(+) binding. Glu58 and Gln101 together coordinate L-methionine. The interval 101–111 (QSPDIAQGVDK) is flexible loop. ATP is bound by residues 176–178 (DGK), 243–244 (RF), Asp252, 258–259 (RK), and Lys279. L-methionine is bound at residue Asp252. Lys283 is an L-methionine binding site.

The protein belongs to the AdoMet synthase family. As to quaternary structure, homotetramer; dimer of dimers. Mg(2+) is required as a cofactor. The cofactor is K(+).

It localises to the cytoplasm. The enzyme catalyses L-methionine + ATP + H2O = S-adenosyl-L-methionine + phosphate + diphosphate. The protein operates within amino-acid biosynthesis; S-adenosyl-L-methionine biosynthesis; S-adenosyl-L-methionine from L-methionine: step 1/1. In terms of biological role, catalyzes the formation of S-adenosylmethionine (AdoMet) from methionine and ATP. The overall synthetic reaction is composed of two sequential steps, AdoMet formation and the subsequent tripolyphosphate hydrolysis which occurs prior to release of AdoMet from the enzyme. This is S-adenosylmethionine synthase from Staphylococcus aureus (strain MRSA252).